The chain runs to 281 residues: 2-dehydro-3-deoxyphosphooctonate aldolase (281 aa).

The protein belongs to the KdsA family.

It is found in the cytoplasm. It catalyses the reaction D-arabinose 5-phosphate + phosphoenolpyruvate + H2O = 3-deoxy-alpha-D-manno-2-octulosonate-8-phosphate + phosphate. The protein operates within carbohydrate biosynthesis; 3-deoxy-D-manno-octulosonate biosynthesis; 3-deoxy-D-manno-octulosonate from D-ribulose 5-phosphate: step 2/3. It functions in the pathway bacterial outer membrane biogenesis; lipopolysaccharide biosynthesis. This chain is 2-dehydro-3-deoxyphosphooctonate aldolase, found in Acidithiobacillus ferrooxidans (strain ATCC 23270 / DSM 14882 / CIP 104768 / NCIMB 8455) (Ferrobacillus ferrooxidans (strain ATCC 23270)).